The following is a 498-amino-acid chain: NAD(P)H-quinone oxidoreductase chain 4, chloroplastic (498 aa).

14 consecutive transmembrane segments (helical) span residues 4-24, 37-57, 87-107, 111-131, 134-154, 167-187, 207-227, 242-262, 274-294, 305-325, 331-351, 386-406, 417-437, and 461-481; these read LPWL…IPLL, LGIC…QFHL, MGLI…AWPV, VRLF…LFAS, ILLF…LLSM, FLLY…TMGL, IAVE…KLPI, HYST…YGLI, FLFS…ASLI, IAYS…SITD, AILQ…LAGI, LALP…GIVT, IILF…LSML, and IFIS…PNLV.

It belongs to the complex I subunit 4 family.

It localises to the plastid. It is found in the chloroplast thylakoid membrane. It catalyses the reaction a plastoquinone + NADH + (n+1) H(+)(in) = a plastoquinol + NAD(+) + n H(+)(out). It carries out the reaction a plastoquinone + NADPH + (n+1) H(+)(in) = a plastoquinol + NADP(+) + n H(+)(out). The protein is NAD(P)H-quinone oxidoreductase chain 4, chloroplastic of Psilotum nudum (Whisk fern).